A 100-amino-acid chain; its full sequence is NAD(P)H-quinone oxidoreductase subunit 4L, chloroplastic (100 aa).

Helical transmembrane passes span 1-21 (MLEHVLVLSAYLFSVGLYGLI), 31-51 (ICLELIFNAVNINFVTFSDFF), and 60-80 (IFAIFVIAIAAAEAAIGLAIL).

The protein belongs to the complex I subunit 4L family. NDH is composed of at least 16 different subunits, 5 of which are encoded in the nucleus.

The protein resides in the plastid. The protein localises to the chloroplast thylakoid membrane. It carries out the reaction a plastoquinone + NADH + (n+1) H(+)(in) = a plastoquinol + NAD(+) + n H(+)(out). The catalysed reaction is a plastoquinone + NADPH + (n+1) H(+)(in) = a plastoquinol + NADP(+) + n H(+)(out). Functionally, NDH shuttles electrons from NAD(P)H:plastoquinone, via FMN and iron-sulfur (Fe-S) centers, to quinones in the photosynthetic chain and possibly in a chloroplast respiratory chain. The immediate electron acceptor for the enzyme in this species is believed to be plastoquinone. Couples the redox reaction to proton translocation, and thus conserves the redox energy in a proton gradient. The chain is NAD(P)H-quinone oxidoreductase subunit 4L, chloroplastic from Trachelium caeruleum (Blue throatwort).